Here is a 367-residue protein sequence, read N- to C-terminus: Mitogen-activated protein kinase 12 (367 aa).

One can recognise a Protein kinase domain in the interval 27 to 311 (YQDLQPVGSG…AAEALTHPYF (285 aa)). ATP contacts are provided by residues 33–41 (VGSGAYGAV) and lysine 56. Aspartate 153 functions as the Proton acceptor in the catalytic mechanism. Threonine 183 carries the post-translational modification Phosphothreonine. The TXY signature appears at 183–185 (TGY). Tyrosine 185 is modified (phosphotyrosine).

It belongs to the protein kinase superfamily. CMGC Ser/Thr protein kinase family. MAP kinase subfamily. In terms of assembly, monomer. Interacts with the PDZ domain of the syntrophin SNTA1. Interacts with SH3BP5, LIN7C, SCRIB and SYNJ2BP. Interacts with PTPN4; this interaction induces the activation of PTPN4 phosphatase activity. Mg(2+) serves as cofactor. In terms of processing, dually phosphorylated on Thr-183 and Tyr-185 by MAP2K3/MKK3 and MAP2K6/MKK6, which activates the enzyme. Post-translationally, ubiquitinated. Ubiquitination leads to degradation by the proteasome pathway. As to expression, highly expressed in skeletal muscle. Also expressed in the heart, particularly in cardiac myocytes, lung, thymus and testes.

Its subcellular location is the cytoplasm. The protein resides in the nucleus. It is found in the mitochondrion. The enzyme catalyses L-seryl-[protein] + ATP = O-phospho-L-seryl-[protein] + ADP + H(+). The catalysed reaction is L-threonyl-[protein] + ATP = O-phospho-L-threonyl-[protein] + ADP + H(+). Activated by phosphorylation on threonine and tyrosine. MAP2K3/MKK3 and MAP2K6/MKK6 are both essential for the activation of MAPK12 induced by environmental stress, whereas MAP2K6/MKK6 is the major MAPK12 activator in response to TNF-alpha. Its function is as follows. Serine/threonine kinase which acts as an essential component of the MAP kinase signal transduction pathway. MAPK12 is one of the four p38 MAPKs which play an important role in the cascades of cellular responses evoked by extracellular stimuli such as pro-inflammatory cytokines or physical stress leading to direct activation of transcription factors such as ELK1 and ATF2. Accordingly, p38 MAPKs phosphorylate a broad range of proteins and it has been estimated that they may have approximately 200 to 300 substrates each. Some of the targets are downstream kinases such as MAPKAPK2, which are activated through phosphorylation and further phosphorylate additional targets. Plays a role in myoblast differentiation and also in the down-regulation of cyclin D1 in response to hypoxia in adrenal cells suggesting MAPK12 may inhibit cell proliferation while promoting differentiation. Phosphorylates DLG1. Following osmotic shock, MAPK12 in the cell nucleus increases its association with nuclear DLG1, thereby causing dissociation of DLG1-SFPQ complexes. This function is independent of its catalytic activity and could affect mRNA processing and/or gene transcription to aid cell adaptation to osmolarity changes in the environment. Regulates UV-induced checkpoint signaling and repair of UV-induced DNA damage and G2 arrest after gamma-radiation exposure. MAPK12 is involved in the regulation of SLC2A1 expression and basal glucose uptake in L6 myotubes; and negatively regulates SLC2A4 expression and contraction-mediated glucose uptake in adult skeletal muscle. C-Jun (JUN) phosphorylation is stimulated by MAPK14 and inhibited by MAPK12, leading to a distinct AP-1 regulation. MAPK12 is required for the normal kinetochore localization of PLK1, prevents chromosomal instability and supports mitotic cell viability. MAPK12-signaling is also positively regulating the expansion of transient amplifying myogenic precursor cells during muscle growth and regeneration. This chain is Mitogen-activated protein kinase 12 (Mapk12), found in Mus musculus (Mouse).